We begin with the raw amino-acid sequence, 428 residues long: tRNA(Ile)-lysidine synthase (428 aa).

S28–S33 is a binding site for ATP.

Belongs to the tRNA(Ile)-lysidine synthase family.

The protein localises to the cytoplasm. The enzyme catalyses cytidine(34) in tRNA(Ile2) + L-lysine + ATP = lysidine(34) in tRNA(Ile2) + AMP + diphosphate + H(+). Ligates lysine onto the cytidine present at position 34 of the AUA codon-specific tRNA(Ile) that contains the anticodon CAU, in an ATP-dependent manner. Cytidine is converted to lysidine, thus changing the amino acid specificity of the tRNA from methionine to isoleucine. This Streptococcus pyogenes serotype M1 protein is tRNA(Ile)-lysidine synthase.